The chain runs to 867 residues: Retinoblastoma-related protein 1 (867 aa).

Residues T275–L476 are domain A. The pocket; binds RPD3I and RBAP1 stretch occupies residues T275–P722. Residues I477 to D594 form a spacer region. A disordered region spans residues E512–S563. The segment covering A530–N540 has biased composition (basic and acidic residues). Over residues E541–Q552 the composition is skewed to polar residues. Residues V595–P722 are domain B. 2 disordered regions span residues P734–K762 and Q843–T867.

This sequence belongs to the retinoblastoma protein (RB) family. In terms of assembly, interacts with RPD3I, RBAP1, the Arabidopsis cyclin CYCD3-1, the mastrevirus replication-associated protein A (RepA) and the begomovirus replication-associated protein (Rep). In terms of tissue distribution, ubiquitous.

The protein localises to the nucleus. Regulator of biological processes that recruits a histone deacetylase to control gene transcription. May play a role in the entry into mitosis, negatively regulating the cell proliferation. Formation of stable complexes with geminiviridae replication-associated proteins may create a cellular environment which favors viral DNA replication. The polypeptide is Retinoblastoma-related protein 1 (RBR1) (Zea mays (Maize)).